We begin with the raw amino-acid sequence, 120 residues long: Large ribosomal subunit protein uL18 (120 aa).

This sequence belongs to the universal ribosomal protein uL18 family. In terms of assembly, part of the 50S ribosomal subunit; part of the 5S rRNA/L5/L18/L25 subcomplex. Contacts the 5S and 23S rRNAs.

In terms of biological role, this is one of the proteins that bind and probably mediate the attachment of the 5S RNA into the large ribosomal subunit, where it forms part of the central protuberance. The chain is Large ribosomal subunit protein uL18 from Maricaulis maris (strain MCS10) (Caulobacter maris).